The sequence spans 191 residues: Corrinoid adenosyltransferase (191 aa).

ATP is bound by residues 10-18, Lys28, 140-145, and Asn166; these read TRTGDNGTT and RRAERS.

This sequence belongs to the Cob(I)alamin adenosyltransferase family.

It is found in the cytoplasm. It carries out the reaction 2 cob(II)yrinate a,c diamide + reduced [electron-transfer flavoprotein] + 2 ATP = 2 adenosylcob(III)yrinate a,c-diamide + 2 triphosphate + oxidized [electron-transfer flavoprotein] + 3 H(+). It catalyses the reaction 2 cob(II)alamin + reduced [electron-transfer flavoprotein] + 2 ATP = 2 adenosylcob(III)alamin + 2 triphosphate + oxidized [electron-transfer flavoprotein] + 3 H(+). Its pathway is cofactor biosynthesis; adenosylcobalamin biosynthesis; adenosylcobalamin from cob(II)yrinate a,c-diamide: step 2/7. The chain is Corrinoid adenosyltransferase from Mycobacterium leprae (strain TN).